The following is a 184-amino-acid chain: MAPKAVLVGLPGSGKSTIGRRLAKALGVSLLDTDAAIEQQAGRSIAEIFATDGEEEFRRIEEEVVRAALVDHDGVLSLGGGAVTSPGVRSALDGHTVVYLEISAAEGVRRTGGSNVRPLLAGPDRAEKFRALMSQRIPLYRRVSTIRVDTNRRNPGAVVRYIMSRLDDPTPNTSPSSTASGAAT.

ATP is bound at residue 12-17 (GSGKST). Ser-16 contacts Mg(2+). Positions 34, 58, and 80 each coordinate substrate. Arg-117 lines the ATP pocket. Arg-136 contributes to the substrate binding site. Arg-153 serves as a coordination point for ATP. The disordered stretch occupies residues 164-184 (SRLDDPTPNTSPSSTASGAAT). The span at 169–184 (PTPNTSPSSTASGAAT) shows a compositional bias: low complexity.

It belongs to the shikimate kinase family. Monomer. Mg(2+) serves as cofactor.

The protein resides in the cytoplasm. The enzyme catalyses shikimate + ATP = 3-phosphoshikimate + ADP + H(+). It functions in the pathway metabolic intermediate biosynthesis; chorismate biosynthesis; chorismate from D-erythrose 4-phosphate and phosphoenolpyruvate: step 5/7. Catalyzes the specific phosphorylation of the 3-hydroxyl group of shikimic acid using ATP as a cosubstrate. The polypeptide is Shikimate kinase (Mycobacterium ulcerans (strain Agy99)).